Consider the following 110-residue polypeptide: ATP-dependent Clp protease adapter protein ClpS 2 (110 aa).

Positions 1 to 24 (MSNDENRSGSPTGPNTSVITKVKP) are disordered. Positions 8-19 (SGSPTGPNTSVI) are enriched in polar residues.

This sequence belongs to the ClpS family. Binds to the N-terminal domain of the chaperone ClpA.

In terms of biological role, involved in the modulation of the specificity of the ClpAP-mediated ATP-dependent protein degradation. This Bradyrhizobium diazoefficiens (strain JCM 10833 / BCRC 13528 / IAM 13628 / NBRC 14792 / USDA 110) protein is ATP-dependent Clp protease adapter protein ClpS 2.